Reading from the N-terminus, the 243-residue chain is Small ribosomal subunit protein uS3 (243 aa).

Residue alanine 2 is modified to N-acetylalanine. Phosphoserine is present on residues serine 6 and serine 35. Residues 21 to 92 (LNEFLTRELA…SVELYAEKVA (72 aa)) enclose the KH type-2 domain. Phosphothreonine is present on threonine 42. Lysine 62 bears the N6-acetyllysine mark. Asymmetric dimethylarginine occurs at positions 64, 65, and 67. Threonine 70 is subject to Phosphothreonine. Residue lysine 90 forms a Glycyl lysine isopeptide (Lys-Gly) (interchain with G-Cter in ubiquitin) linkage. Phosphoserine is present on serine 104. Lysine 132 carries the N6-succinyllysine modification. Residues 200–243 (PKKPLPDHVSIVEPKDEILPTTPISEQKGGKPEPPAMPQPVPTA) form a disordered region. Lysine 202 is covalently cross-linked (Glycyl lysine isopeptide (Lys-Gly) (interchain with G-Cter in ubiquitin)). Serine 209 carries the phosphoserine modification. Lysine 214 participates in a covalent cross-link: Glycyl lysine isopeptide (Lys-Gly) (interchain with G-Cter in SUMO2); alternate. A Glycyl lysine isopeptide (Lys-Gly) (interchain with G-Cter in ubiquitin); alternate cross-link involves residue lysine 214. Phosphothreonine is present on residues threonine 220 and threonine 221. The residue at position 224 (serine 224) is a Phosphoserine. Lysine 230 participates in a covalent cross-link: Glycyl lysine isopeptide (Lys-Gly) (interchain with G-Cter in SUMO2). Over residues 231–243 (PEPPAMPQPVPTA) the composition is skewed to pro residues. Phosphothreonine is present on threonine 242.

It belongs to the universal ribosomal protein uS3 family. Component of the 40S small ribosomal subunit. Identified in a IGF2BP1-dependent mRNP granule complex containing untranslated mRNAs. Interacts with HNRPD. Interacts with PRMT1; the interaction methylates RPS3. Interacts with SUMO1; the interaction sumoylates RPS3. Interacts with UBC9. Interacts with CDK1; the interaction phosphorylates RPS3. Interacts with PRKCD; the interaction phosphorylates RPS3. Interacts with PKB/AKT; the interaction phosphorylates RPS3. Interacts with E2F1; the interaction occurs in the absence of nerve growth factor and increases transcription of pro-apoptotic proteins BCL2L11/BIM and HRK/Dp5. Interacts with the base excision repair proteins APEX1 and OGG1; interaction with OGG1 increases OGG1 N-glycosylase activity. Interacts with UNG; the interaction increases the uracil excision activity of UNG1. Interacts with HSP90; the interaction prevents the ubiquitination and proteasome-dependent degradation of RPS3 and is suppressed by increased ROS levels. Interacts with TOM70; the interaction promotes translocation of RPS3 to the mitochondrion. Interacts (via N-terminus) with RELA (via N-terminus); the interaction enhances the DNA-binding activity of the NF-kappa-B p65-p50 complex. Interacts with NFKBIA; the interaction is direct and may bridge the interaction between RPS3 and RELA. Interacts with IKKB; the interaction phosphorylates RPS3 and enhances its translocation to the nucleus. Interacts (via KH domain) with MDM2 and TP53. Interacts with TRADD. Interacts with ASCC3. Identified in a HCV IRES-mediated translation complex, at least composed of EIF3C, IGF2BP1, RPS3 and HCV RNA-replicon. Interacts with CRY1. Methylation by PRMT1 is required for import into the nucleolus and for ribosome assembly. Post-translationally, sumoylation by SUMO1 enhances protein stability through increased resistance to proteolysis. Sumoylation occurs at one or more of the three consensus sites, Lys-18, Lys-214 and Lys-230. In terms of processing, phosphorylation at Thr-221 by CDK1 occurs mainly in G2/M phase. Phosphorylation by PRKCD occurs on a non-ribosomal-associated form which results in translocation of RPS3 to the nucleus and enhances its endonuclease activity. Phosphorylated on Ser-209 by IKKB in response to activation of the NF-kappa-B p65-p50 complex which enhances the association of RPS3 with importin-alpha and mediates the nuclear translocation of RPS3. Phosphorylation by MAPK is required for translocation to the nucleus following exposure of cells to DNA damaging agents such as hydrogen peroxide. Phosphorylation by PKB/AKT mediates RPS3 nuclear translocation, enhances RPS3 endonuclease activity and suppresses RPS3-induced neuronal apoptosis. Ubiquitinated; ubiquitination is prevented by interaction with HSP90 which stabilizes the protein. Monoubiquitinated at Lys-214 by RNF10 and ZNF598 when a ribosome has stalled during translation of poly(A) sequences, leading to preclude synthesis of a long poly-lysine tail and initiate the ribosome quality control (RQC) pathway to degrade the potentially detrimental aberrant nascent polypeptide. Deubiquitinated at Lys-214 by USP10, preventing degradation by the proteasome and promoting 40S ribosome subunit recycling following ribosome dissociation. Post-translationally, ufmylated by UFL1.

Its subcellular location is the cytoplasm. It localises to the nucleus. The protein resides in the nucleolus. It is found in the mitochondrion inner membrane. The protein localises to the cytoskeleton. Its subcellular location is the spindle. It carries out the reaction 2'-deoxyribonucleotide-(2'-deoxyribose 5'-phosphate)-2'-deoxyribonucleotide-DNA = a 3'-end 2'-deoxyribonucleotide-(2,3-dehydro-2,3-deoxyribose 5'-phosphate)-DNA + a 5'-end 5'-phospho-2'-deoxyribonucleoside-DNA + H(+). Its activity is regulated as follows. Endonuclease activity is inhibited by MgCl2 on apurinic/apyrimidinic DNA but not on UV-irradiated DNA. Its function is as follows. Component of the small ribosomal subunit. The ribosome is a large ribonucleoprotein complex responsible for the synthesis of proteins in the cell. Has endonuclease activity and plays a role in repair of damaged DNA. Cleaves phosphodiester bonds of DNAs containing altered bases with broad specificity and cleaves supercoiled DNA more efficiently than relaxed DNA. Displays high binding affinity for 7,8-dihydro-8-oxoguanine (8-oxoG), a common DNA lesion caused by reactive oxygen species (ROS). Has also been shown to bind with similar affinity to intact and damaged DNA. Stimulates the N-glycosylase activity of the base excision protein OGG1. Enhances the uracil excision activity of UNG1. Also stimulates the cleavage of the phosphodiester backbone by APEX1. When located in the mitochondrion, reduces cellular ROS levels and mitochondrial DNA damage. Has also been shown to negatively regulate DNA repair in cells exposed to hydrogen peroxide. Plays a role in regulating transcription as part of the NF-kappa-B p65-p50 complex where it binds to the RELA/p65 subunit, enhances binding of the complex to DNA and promotes transcription of target genes. Represses its own translation by binding to its cognate mRNA. Binds to and protects TP53/p53 from MDM2-mediated ubiquitination. Involved in spindle formation and chromosome movement during mitosis by regulating microtubule polymerization. Involved in induction of apoptosis through its role in activation of CASP8. Induces neuronal apoptosis by interacting with the E2F1 transcription factor and acting synergistically with it to up-regulate pro-apoptotic proteins BCL2L11/BIM and HRK/Dp5. Interacts with TRADD following exposure to UV radiation and induces apoptosis by caspase-dependent JNK activation. This is Small ribosomal subunit protein uS3 (RPS3) from Oryctolagus cuniculus (Rabbit).